The following is a 2590-amino-acid chain: DNA polymerase theta (2590 aa).

Basic residues predominate over residues 1 to 12 (MNLLRRSGKRRR). The interval 1–33 (MNLLRRSGKRRRSESGSDSFSGSGGDSSASPQF) is disordered. Residues 16-30 (GSDSFSGSGGDSSAS) are compositionally biased toward low complexity. ATP contacts are provided by residues Q96 and 115–122 (APTSAGKT). Residues 102–286 (LGQVLEGKNL…WLNAELYHTD (185 aa)) enclose the Helicase ATP-binding domain. The interval 102–554 (LGQVLEGKNL…STSQDMHTYA (453 aa)) is helicase activity. The DEAH box signature appears at 216–219 (DELH). One can recognise a Helicase C-terminal domain in the interval 321-554 (GDEDHVVSLC…STSQDMHTYA (234 aa)). An interaction with RAD51 region spans residues 847-894 (DEEEEAVEERRNMRTIWVTGRKGLTEREAAALIVEEARMILQQDLVEM). An N6-acetyllysine modification is found at K990. The interval 1034-1060 (KMSRSFRSWKRRKHLKRSRDSSPLKDS) is disordered. Over residues 1040–1050 (RSWKRRKHLKR) the composition is skewed to basic residues. Residues S1289, S1482, S1486, S1488, S1493, S1555, and S1563 each carry the phosphoserine; by PLK1 modification. The disordered stretch occupies residues 1594-1622 (SDPVLDEHHQGDQDGGDQDERAEKSKLTG). A compositionally biased stretch (basic and acidic residues) spans 1598 to 1619 (LDEHHQGDQDGGDQDERAEKSK). Residues S1628 and S1635 each carry the phosphoserine; by PLK1 modification. T1755 is subject to Phosphothreonine; by PLK1. The interval 1777 to 1797 (PSDIKNHDLSPGSRNGFKDNS) is disordered. Residues 2097–2584 (AECESQKHIM…KVKIGASWGE (488 aa)) form a DNA polymerase activity region. Loop regions lie at residues 2142–2177 (KLPP…GRQF) and 2257–2322 (EIKM…VPFP). Mg(2+)-binding residues include D2330 and Y2331. The interval 2491–2535 (QLETFHSTFKSHGHREGMLQSDQTGLSRKRKLQGMFCPIRGGFFI) is loop 3. D2540 lines the Mg(2+) pocket.

It belongs to the DNA polymerase type-A family. In terms of assembly, homomultimer; forms homodimers and homotetramers. Interacts with RAD51. Interacts with ORC2 and ORC4. Interacts with RHNO1; interaction takes place during mitosis and promotes POLQ recruitment to DNA damage sites. Interacts (when phosphorylated) with TOPBP1 (via BRCT domains 7 and 8); promoting POLQ recruitment to DNA damage sites. Mg(2+) is required as a cofactor. Phosphorylated by PLK1; promoting interaction with TOPBP1 and recruitment to DNA damage sites. As to expression, highly expressed in testis.

It localises to the nucleus. The protein localises to the chromosome. It carries out the reaction DNA(n) + a 2'-deoxyribonucleoside 5'-triphosphate = DNA(n+1) + diphosphate. The catalysed reaction is ATP + H2O = ADP + phosphate + H(+). Specifically inhibited by the antibiotic novobiocin. The polymerase activity is specifically inhibited by the small molecule ART558. Novobiocin and ART558 confer specific killing of BRCA1/2-deficient cells and synergize with the poly [ADP-ribose] polymerase (PARP) inhibitor olaparib. In terms of biological role, low-fidelity DNA polymerase with a helicase activity that promotes microhomology-mediated end-joining (MMEJ), an alternative non-homologous end-joining (NHEJ) machinery required to repair double-strand breaks in DNA during mitosis. MMEJ is an error-prone repair pathway that produces deletions of sequences from the strand being repaired and promotes genomic rearrangements, such as telomere fusions, some of them leading to cellular transformation. MMEJ is required during mitosis to repair persistent double-strand breaks that originate in S-phase. Although error-prone, MMEJ protects against chromosomal instability and tumorigenesis. The polymerase acts by binding directly the 2 ends of resected double-strand breaks, allowing microhomologous sequences in the overhangs to form base pairs. It then extends each strand from the base-paired region using the opposing overhang as a template. Requires partially resected DNA containing 2 to 6 base pairs of microhomology to perform MMEJ. The polymerase lacks proofreading activity and is highly promiscuous: unlike most polymerases, promotes extension of ssDNA and partial ssDNA (pssDNA) substrates. When the ends of a break do not contain terminal microhomology must identify embedded complementary sequences through a scanning step. Also acts as a DNA helicase, promoting dissociation of the replication protein A complex (RPA/RP-A), composed of RPA1, RPA2 and RPA3, from resected double-strand breaks to allow their annealing and subsequent joining by MMEJ. Removal of RPA/RP-A complex proteins prevents RAD51 accumulation at resected ends, thereby inhibiting homology-recombination repair (HR) pathway. Also shows RNA-directed DNA polymerase activity to mediate DNA repair in vitro; however this activity needs additional evidence in vivo. May also have lyase activity. Involved in somatic hypermutation of immunoglobulin genes, a process that requires the activity of DNA polymerases to ultimately introduce mutations at both A/T and C/G base pairs. POLQ-mediated end joining activity is involved in random integration of exogenous DNA hampers. The chain is DNA polymerase theta from Homo sapiens (Human).